Here is a 279-residue protein sequence, read N- to C-terminus: Ribosomal RNA small subunit methyltransferase J (279 aa).

S-adenosyl-L-methionine contacts are provided by residues 138 to 139 (ER) and D194.

This sequence belongs to the methyltransferase superfamily. RsmJ family.

Its subcellular location is the cytoplasm. The catalysed reaction is guanosine(1516) in 16S rRNA + S-adenosyl-L-methionine = N(2)-methylguanosine(1516) in 16S rRNA + S-adenosyl-L-homocysteine + H(+). Specifically methylates the guanosine in position 1516 of 16S rRNA. This Acinetobacter baumannii (strain AYE) protein is Ribosomal RNA small subunit methyltransferase J.